Reading from the N-terminus, the 347-residue chain is Dihydroorotase (347 aa).

Zn(2+) is bound by residues His14 and His16. Substrate contacts are provided by residues 16–18 and Asn42; that span reads HLR. Residues Lys100, His137, and His175 each contribute to the Zn(2+) site. Lys100 carries the post-translational modification N6-carboxylysine. A substrate-binding site is contributed by His137. Substrate is bound at residue Leu220. Asp248 provides a ligand contact to Zn(2+). The active site involves Asp248. Residues His252 and Ala264 each coordinate substrate.

This sequence belongs to the metallo-dependent hydrolases superfamily. DHOase family. Class II DHOase subfamily. As to quaternary structure, homodimer. Zn(2+) is required as a cofactor.

It carries out the reaction (S)-dihydroorotate + H2O = N-carbamoyl-L-aspartate + H(+). Its pathway is pyrimidine metabolism; UMP biosynthesis via de novo pathway; (S)-dihydroorotate from bicarbonate: step 3/3. Functionally, catalyzes the reversible cyclization of carbamoyl aspartate to dihydroorotate. This chain is Dihydroorotase, found in Pseudomonas savastanoi pv. phaseolicola (strain 1448A / Race 6) (Pseudomonas syringae pv. phaseolicola (strain 1448A / Race 6)).